We begin with the raw amino-acid sequence, 379 residues long: Thiosulfate/3-mercaptopyruvate sulfurtransferase 1, mitochondrial (379 aa).

The N-terminal 56 residues, 1 to 56, are a transit peptide targeting the mitochondrion; it reads MASTLFSRTFLAASHRLITPSLPQKIFNPATFLSRSLHSQLGSASTAYKSTTWARR. Ala57 bears the N-acetylalanine mark. Rhodanese domains lie at 91–208 and 259–373; these read REPD…DVES and EDPT…LPIE. The Cysteine persulfide intermediate role is filled by Cys333.

As to expression, expressed in roots, rosette and cauline leaves, stems, flowers and siliques.

The protein resides in the mitochondrion. The catalysed reaction is thiosulfate + hydrogen cyanide = thiocyanate + sulfite + 2 H(+). It carries out the reaction 2-oxo-3-sulfanylpropanoate + [thioredoxin]-dithiol = [thioredoxin]-disulfide + hydrogen sulfide + pyruvate + H(+). Its function is as follows. Catalyzes the transfer of a sulfur ion from a donor to cyanide or to other thiol compounds. Substrate preference is 3-mercaptopyruvate &gt; thiosulfate. Involved in embryo and seed development. The sequence is that of Thiosulfate/3-mercaptopyruvate sulfurtransferase 1, mitochondrial (STR1) from Arabidopsis thaliana (Mouse-ear cress).